The chain runs to 350 residues: Protein YIPF3 (350 aa).

Residues 1-10 show a composition bias toward low complexity; that stretch reads MATTAAPAGG. A disordered region spans residues 1-51; the sequence is MATTAAPAGGARNGAGPEWGGFEENIQGGGSAVIDMENMDDTSGSSFEDMG. Alanine 2 carries the N-acetylalanine modification. Residues 2 to 148 lie on the Cytoplasmic side of the membrane; sequence ATTAAPAGGA…PIKMVNFPQK (147 aa). A helical membrane pass occupies residues 149 to 169; the sequence is IAGELYGPLMLVFTLVAILLH. Residues 170-187 are Lumenal-facing; that stretch reads GMKTSDTIIREGTLMGTA. The helical transmembrane segment at 188-208 threads the bilayer; sequence IGTCFGYWLGVSSFIYFLAYL. Topologically, residues 209–214 are cytoplasmic; it reads CNAQIT. A helical transmembrane segment spans residues 215–237; the sequence is MLQMLALLGYGLFGHCIVLFITY. The Lumenal portion of the chain corresponds to 238–240; the sequence is NIH. Residues 241–263 traverse the membrane as a helical segment; the sequence is LHALFYLFWLLVGGLSTLRMVAV. At 264–274 the chain is on the cytoplasmic side; it reads LVSRTVGPTQR. Residues 275–295 traverse the membrane as a helical segment; that stretch reads LLLCGTLAALHMLFLLYLHFA. The Lumenal segment spans residues 296–350; sequence YHKVVEGILDTLEGPNIPPIQRVPRDIPAMLPAARLPTTVLNATAKAVAVTLQSH. 2 O-linked (GalNAc...) threonine glycosylation sites follow: threonine 333 and threonine 334. Asparagine 337 carries an N-linked (GlcNAc...) asparagine glycan. Residues threonine 339 and threonine 346 are each glycosylated (O-linked (GalNAc...) threonine).

The protein belongs to the YIP1 family. In terms of assembly, interacts with YIPF4 and YIPF5. N-glycosylated in the ER (40 kDa form I), then O-glycosylated in the Golgi apparatus (46 kDa form II), the C-terminal lumenal region is later removed in the Golgi apparatus to produce a 36 kDa form III. O-glycosylated with core 1-like and core 2-like glycans. O-glycan heterogeneity at Thr-346: HexNAc (minor), HexHexNAc (major), Hex1HexNAc2 (minor), Hex2HexNAc2 (minor) and dHex1Hex2HexNAc2 (minor). In terms of tissue distribution, expressed by nucleated hematopoietic cells (at protein level).

Its subcellular location is the cell membrane. It is found in the cytoplasm. The protein localises to the golgi apparatus. The protein resides in the cis-Golgi network membrane. Functionally, involved in the maintenance of the Golgi structure. May play a role in hematopoiesis. The polypeptide is Protein YIPF3 (YIPF3) (Homo sapiens (Human)).